We begin with the raw amino-acid sequence, 366 residues long: NADH-quinone oxidoreductase subunit D (366 aa).

It belongs to the complex I 49 kDa subunit family. NDH-1 is composed of 14 different subunits. Subunits NuoB, C, D, E, F, and G constitute the peripheral sector of the complex.

The protein resides in the cell membrane. It carries out the reaction a quinone + NADH + 5 H(+)(in) = a quinol + NAD(+) + 4 H(+)(out). Its function is as follows. NDH-1 shuttles electrons from NADH, via FMN and iron-sulfur (Fe-S) centers, to quinones in the respiratory chain. The immediate electron acceptor for the enzyme in this species is believed to be a menaquinone. Couples the redox reaction to proton translocation (for every two electrons transferred, four hydrogen ions are translocated across the cytoplasmic membrane), and thus conserves the redox energy in a proton gradient. This Bacillus cereus (strain ATCC 14579 / DSM 31 / CCUG 7414 / JCM 2152 / NBRC 15305 / NCIMB 9373 / NCTC 2599 / NRRL B-3711) protein is NADH-quinone oxidoreductase subunit D.